A 484-amino-acid chain; its full sequence is Ribosome biogenesis protein YTM1 (484 aa).

The ubiquitin-like (UBL) domain stretch occupies residues Val11–Arg94. 7 WD repeats span residues Ser121–Ser160, Gly166–Ser204, Gly215–Ala254, Val289–Thr329, Thr331–Ser372, Gly378–Gly418, and Gly448–Ser484.

This sequence belongs to the WD repeat WDR12/YTM1 family. As to quaternary structure, component of the NOP7 complex, composed of ERB1, NOP7 and YTM1. The complex is held together by ERB1, which interacts with NOP7 via its N-terminal domain and with YTM1 via a high-affinity interaction between the seven-bladed beta-propeller domains of the 2 proteins. The NOP7 complex associates with the 66S pre-ribosome. Interacts (via UBL domain) with MDN1 (via VWFA/MIDAS domain).

Its subcellular location is the nucleus. It is found in the nucleolus. It localises to the nucleoplasm. Component of the NOP7 complex, which is required for maturation of the 25S and 5.8S ribosomal RNAs and formation of the 60S ribosome. This is Ribosome biogenesis protein YTM1 from Pyricularia oryzae (strain 70-15 / ATCC MYA-4617 / FGSC 8958) (Rice blast fungus).